The chain runs to 297 residues: ClpXP adapter protein SpxH (297 aa).

Belongs to the SpxH family. Interacts with Spx.

Its subcellular location is the cytoplasm. Adapter protein required for efficient degradation of Spx by ClpXP under non-stress conditions. Interaction with Spx stabilizes Spx and exposes the C-terminus of Spx for recognition and proteolysis by ClpXP. The chain is ClpXP adapter protein SpxH from Bacillus thuringiensis subsp. konkukian (strain 97-27).